Reading from the N-terminus, the 185-residue chain is Imidazoleglycerol-phosphate dehydratase (185 aa).

This sequence belongs to the imidazoleglycerol-phosphate dehydratase family.

The protein resides in the cytoplasm. It catalyses the reaction D-erythro-1-(imidazol-4-yl)glycerol 3-phosphate = 3-(imidazol-4-yl)-2-oxopropyl phosphate + H2O. It participates in amino-acid biosynthesis; L-histidine biosynthesis; L-histidine from 5-phospho-alpha-D-ribose 1-diphosphate: step 6/9. The protein is Imidazoleglycerol-phosphate dehydratase of Pyrobaculum arsenaticum (strain DSM 13514 / JCM 11321 / PZ6).